The primary structure comprises 64 residues: Ferredoxin-like protein in nif region (64 aa).

One can recognise a 4Fe-4S ferredoxin-type domain in the interval Ala-2–Glu-30. The [4Fe-4S] cluster site is built by Cys-10, Cys-13, Cys-16, Cys-20, Cys-39, Cys-42, Cys-51, and Cys-55.

The cofactor is [4Fe-4S] cluster.

The polypeptide is Ferredoxin-like protein in nif region (fdxN) (Sinorhizobium fredii (strain NBRC 101917 / NGR234)).